A 398-amino-acid chain; its full sequence is Acetate kinase (398 aa).

Asn10 serves as a coordination point for Mg(2+). An ATP-binding site is contributed by Lys17. Substrate is bound at residue Arg89. Asp148 acts as the Proton donor/acceptor in catalysis. ATP-binding positions include His208–Gly212, Asp283–Arg285, and Gly331–Asn335. Glu385 serves as a coordination point for Mg(2+).

Belongs to the acetokinase family. In terms of assembly, homodimer. Requires Mg(2+) as cofactor. Mn(2+) serves as cofactor.

Its subcellular location is the cytoplasm. It catalyses the reaction acetate + ATP = acetyl phosphate + ADP. The protein operates within metabolic intermediate biosynthesis; acetyl-CoA biosynthesis; acetyl-CoA from acetate: step 1/2. Catalyzes the formation of acetyl phosphate from acetate and ATP. Can also catalyze the reverse reaction. The sequence is that of Acetate kinase from Histophilus somni (strain 2336) (Haemophilus somnus).